A 364-amino-acid chain; its full sequence is Selenide, water dikinase (364 aa).

The active site involves Sec25. Sec25 is a non-standard amino acid (selenocysteine). ATP contacts are provided by residues Lys28, 46–48, Asp66, Asp89, and 141–143; these read GYD and GQT. A Mg(2+)-binding site is contributed by Asp48. Residue Asp89 coordinates Mg(2+). Position 244 (Asp244) interacts with Mg(2+).

It belongs to the selenophosphate synthase 1 family. Class II subfamily. In terms of assembly, homodimer. It depends on Mg(2+) as a cofactor.

It catalyses the reaction hydrogenselenide + ATP + H2O = selenophosphate + AMP + phosphate + 2 H(+). In terms of biological role, synthesizes selenophosphate from selenide and ATP. The polypeptide is Selenide, water dikinase (selD) (Dictyostelium discoideum (Social amoeba)).